A 302-amino-acid chain; its full sequence is GATA transcription factor 28 (302 aa).

The disordered stretch occupies residues 47–66; sequence NAGGMSEGVETDIPSHPGNV. The Tify domain maps to 77–112; that stretch reads GSEQGDQLTLSFQGQVYVFDSVLPEKVQAVLLLLGG. The disordered stretch occupies residues 119–141; sequence APPGLGSPHQNNRVSSLPGTPQR. A compositionally biased stretch (polar residues) spans 126-141; that stretch reads PHQNNRVSSLPGTPQR. The CCT domain maps to 147–189; that stretch reads RLASLVRFREKRKGRNFDKKIRYTVRKEVALRMQRNKGQFTSA. A GATA-type zinc finger spans residues 217–273; the sequence is QHQEISCRHCGIGEKSTPMMRRGPAGPRTLCNACGLMWANKGAFRDLSKASPQTAQN.

Belongs to the type IV zinc-finger family. Class C subfamily. Predominantly expressed in shoot apices, inflorescences and roots.

It is found in the nucleus. Transcriptional activator that specifically binds 5'-GATA-3' or 5'-GAT-3' motifs within gene promoters. The polypeptide is GATA transcription factor 28 (GATA28) (Arabidopsis thaliana (Mouse-ear cress)).